The chain runs to 429 residues: Adenylosuccinate synthetase (429 aa).

GTP-binding positions include 12–18 (GDEGKGK) and 40–42 (GHT). Catalysis depends on aspartate 13, which acts as the Proton acceptor. Mg(2+)-binding residues include aspartate 13 and glycine 40. IMP-binding positions include 13–16 (DEGK), 38–41 (NAGH), threonine 128, arginine 142, glutamine 223, threonine 238, and arginine 302. Residue histidine 41 is the Proton donor of the active site. 298-304 (VNTGRPR) provides a ligand contact to substrate. GTP-binding positions include arginine 304, 330–332 (KLD), and 412–414 (GVG).

Belongs to the adenylosuccinate synthetase family. As to quaternary structure, homodimer. Mg(2+) serves as cofactor.

Its subcellular location is the cytoplasm. It carries out the reaction IMP + L-aspartate + GTP = N(6)-(1,2-dicarboxyethyl)-AMP + GDP + phosphate + 2 H(+). It functions in the pathway purine metabolism; AMP biosynthesis via de novo pathway; AMP from IMP: step 1/2. Functionally, plays an important role in the de novo pathway of purine nucleotide biosynthesis. Catalyzes the first committed step in the biosynthesis of AMP from IMP. The protein is Adenylosuccinate synthetase of Paenarthrobacter aurescens (strain TC1).